The primary structure comprises 142 residues: Hemoglobin A subunit alpha-2 (142 aa).

In terms of domain architecture, Globin spans 2 to 142 (VLTAGDKANV…VAQNLTSKYR (141 aa)). Histidine 59 is a binding site for O2. A heme b-binding site is contributed by histidine 88.

Belongs to the globin family. Tetramer of alpha-1, alpha-2 and two identical beta chains. Red blood cells.

Involved in oxygen transport from the lung to the various peripheral tissues. The chain is Hemoglobin A subunit alpha-2 from Aldabrachelys gigantea (Aldabra giant tortoise).